The following is an 84-amino-acid chain: Esculentin-1B (84 aa).

The first 22 residues, 1–22 (MFTLKKPLLLIVLLGMISLSLC), serve as a signal peptide directing secretion. Residues 23 to 38 (EQERNADEEEGSEIKR) constitute a propeptide that is removed on maturation. Cysteine 78 and cysteine 84 are joined by a disulfide.

This sequence belongs to the frog skin active peptide (FSAP) family. Brevinin subfamily. In terms of tissue distribution, expressed by the skin glands.

It is found in the secreted. In terms of biological role, shows antibacterial activity against representative Gram-negative and Gram-positive bacterial species, and hemolytic activity. The polypeptide is Esculentin-1B (Pelophylax lessonae (Pool frog)).